A 162-amino-acid chain; its full sequence is ATP synthase subunit b (162 aa).

Residues 4–24 (INWGSIIYQLIAFCVLLWLLS) form a helical membrane-spanning segment.

Belongs to the ATPase B chain family. As to quaternary structure, F-type ATPases have 2 components, F(1) - the catalytic core - and F(0) - the membrane proton channel. F(1) has five subunits: alpha(3), beta(3), gamma(1), delta(1), epsilon(1). F(0) has three main subunits: a(1), b(2) and c(10-14). The alpha and beta chains form an alternating ring which encloses part of the gamma chain. F(1) is attached to F(0) by a central stalk formed by the gamma and epsilon chains, while a peripheral stalk is formed by the delta and b chains.

It is found in the cell membrane. Functionally, f(1)F(0) ATP synthase produces ATP from ADP in the presence of a proton or sodium gradient. F-type ATPases consist of two structural domains, F(1) containing the extramembraneous catalytic core and F(0) containing the membrane proton channel, linked together by a central stalk and a peripheral stalk. During catalysis, ATP synthesis in the catalytic domain of F(1) is coupled via a rotary mechanism of the central stalk subunits to proton translocation. Its function is as follows. Component of the F(0) channel, it forms part of the peripheral stalk, linking F(1) to F(0). The polypeptide is ATP synthase subunit b (Halalkalibacterium halodurans (strain ATCC BAA-125 / DSM 18197 / FERM 7344 / JCM 9153 / C-125) (Bacillus halodurans)).